The primary structure comprises 517 residues: Putative lipase ATG15 (517 aa).

The Cytoplasmic portion of the chain corresponds to 1–6; that stretch reads MRASTH. The helical; Signal-anchor for type II membrane protein transmembrane segment at 7–27 threads the bilayer; it reads SWLLLVVVLSLSSFTVNAVIL. Over 28 to 517 the chain is Lumenal; the sequence is EGLIPPRSHL…TNWHFTDETL (490 aa). Residues Asn187, Asn221, and Asn303 are each glycosylated (N-linked (GlcNAc...) asparagine). Ser319 (charge relay system) is an active-site residue. The interval 466-499 is disordered; the sequence is GWRWPWHRGDSADDDGDSDEDTDEDDKLAVPKAR. The span at 477–491 shows a compositional bias: acidic residues; the sequence is ADDDGDSDEDTDEDD.

The protein belongs to the AB hydrolase superfamily. Lipase family. As to quaternary structure, binds to both phosphatidylinositol (PI) and phosphatidylinositol 3,5-bisphosphate (PIP2).

It localises to the endosome. Its subcellular location is the multivesicular body membrane. The protein localises to the prevacuolar compartment membrane. The enzyme catalyses a triacylglycerol + H2O = a diacylglycerol + a fatty acid + H(+). Lipase which is essential for lysis of subvacuolar cytoplasm to vacuole targeted bodies and intravacuolar autophagic bodies. Involved in the lysis of intravacuolar multivesicular body (MVB) vesicles. The intravacuolar membrane disintegration by ATG15 is critical to life span extension. This is Putative lipase ATG15 (ATG15) from Mycosarcoma maydis (Corn smut fungus).